A 691-amino-acid polypeptide reads, in one-letter code: Protein phosphatase Slingshot homolog (691 aa).

Positions 236-291 constitute a DEK-C domain; it reads EETERIIKLKLRDILRESDLENITSKEVRSALEQHTLCALQDYKEFIDNEMIIILA. The region spanning 295–436 is the Tyrosine-protein phosphatase domain; sequence RPSEIFPYLY…LQTYQGILGA (142 aa). Catalysis depends on cysteine 380, which acts as the Phosphocysteine intermediate. A coiled-coil region spans residues 532–580; the sequence is NEHVLSKEQIIQEEKKVMELEKGPEWVVKNNVLEEMKETEERELPNFEL. Residues 585–620 form a disordered region; it reads NQSRERDQETIKESSVITQGSSSLDEVFESSTPTRS. Positions 587–596 are enriched in basic and acidic residues; the sequence is SRERDQETIK. The segment covering 597–619 has biased composition (polar residues); that stretch reads ESSVITQGSSSLDEVFESSTPTR.

The protein belongs to the protein-tyrosine phosphatase family. Interacts with actin and this stimulates phosphatase activity.

It is found in the cytoplasm. Its subcellular location is the cytoskeleton. The protein localises to the cleavage furrow. It localises to the midbody. The enzyme catalyses O-phospho-L-tyrosyl-[protein] + H2O = L-tyrosyl-[protein] + phosphate. It catalyses the reaction O-phospho-L-seryl-[protein] + H2O = L-seryl-[protein] + phosphate. The catalysed reaction is O-phospho-L-threonyl-[protein] + H2O = L-threonyl-[protein] + phosphate. Protein phosphatase which regulates actin filament dynamics. Dephosphorylates and activates the actin binding/depolymerizing factor cofilin, which subsequently binds to actin filaments and stimulates their disassembly. Required for completion of the gastrulation movement and for cytokinesis. This chain is Protein phosphatase Slingshot homolog (ssh), found in Xenopus laevis (African clawed frog).